The following is a 1060-amino-acid chain: Desmoglein-1-beta (1060 aa).

An N-terminal signal peptide occupies residues Met1–Ser23. Positions Glu24–Arg49 are excised as a propeptide. Cadherin domains lie at Glu50–Phe157, Ser158–Leu269, Glu270–Ser389, and Arg386–Asp493. The Extracellular portion of the chain corresponds to Glu50–Pro567. Asn110 carries N-linked (GlcNAc...) (high mannose) asparagine glycosylation. Asn180 carries N-linked (GlcNAc...) asparagine glycosylation. Residues Pro490 to Glu560 form a disordered region. Positions Ser492–Gly503 are enriched in gly residues. A compositionally biased stretch (polar residues) spans Asn510–Gly519. Residues Gly525 to Gly537 are compositionally biased toward gly residues. Residues Asp549 to Glu560 are compositionally biased toward acidic residues. Residues Ala568 to Ile588 traverse the membrane as a helical segment. Over Cys589–Lys1060 the chain is Cytoplasmic. Low complexity predominate over residues Pro792–Gln801. The disordered stretch occupies residues Pro792–Thr811. Desmoglein repeat repeat units follow at residues Ala835–Glu861, Ser862–Val891, Gly892–Ile921, Ala922–Ile949, and Gln950–Val978.

In terms of assembly, interacts with DSC3; there is evidence to suggest that the interaction promotes cell-cell adhesion of keratinocytes. In terms of tissue distribution, expressed in epidermis.

The protein resides in the cell membrane. Its subcellular location is the cell junction. It localises to the desmosome. It is found in the cytoplasm. The protein localises to the nucleus. Functionally, component of intercellular desmosome junctions. Involved in the interaction of plaque proteins and intermediate filaments mediating cell-cell adhesion. This chain is Desmoglein-1-beta (Dsg1b), found in Mus musculus (Mouse).